Consider the following 353-residue polypeptide: Probable tRNA pseudouridine synthase B (353 aa).

Aspartate 45 acts as the Nucleophile in catalysis. The PUA domain maps to 211 to 287 (YPKIVAKKSA…DHIFVEAKHG (77 aa)). Positions 292–353 (VRDREKDVQR…TGVHRRPGSH (62 aa)) are disordered. The segment covering 309–328 (NIRDAAHGPDSRTGRGRKET) has biased composition (basic and acidic residues). The segment covering 336-353 (RVRKLQNKTGVHRRPGSH) has biased composition (basic residues).

The protein belongs to the pseudouridine synthase TruB family. Type 2 subfamily.

The enzyme catalyses uridine(55) in tRNA = pseudouridine(55) in tRNA. In terms of biological role, could be responsible for synthesis of pseudouridine from uracil-55 in the psi GC loop of transfer RNAs. This Thermoplasma volcanium (strain ATCC 51530 / DSM 4299 / JCM 9571 / NBRC 15438 / GSS1) protein is Probable tRNA pseudouridine synthase B.